Here is a 521-residue protein sequence, read N- to C-terminus: Probable rhamnogalacturonase B (521 aa).

Positions methionine 1–alanine 21 are cleaved as a signal peptide. An intrachain disulfide couples cysteine 42 to cysteine 68. The N-linked (GlcNAc...) asparagine glycan is linked to asparagine 145. Aspartate 219 (proton donor) is an active-site residue. Cysteine 221 and cysteine 238 are disulfide-bonded. Asparagine 239 carries an N-linked (GlcNAc...) asparagine glycan. Histidine 294 is a catalytic residue. Asparagine 321 carries an N-linked (GlcNAc...) asparagine glycan. 2 cysteine pairs are disulfide-bonded: cysteine 344–cysteine 350 and cysteine 372–cysteine 381. Residues glutamate 462–isoleucine 521 form a disordered region. A compositionally biased stretch (polar residues) spans arginine 469–proline 486. The segment covering proline 507 to isoleucine 521 has biased composition (basic residues).

It belongs to the glycosyl hydrolase 28 family.

Its subcellular location is the secreted. It carries out the reaction Endohydrolysis of alpha-D-GalA-(1-&gt;2)-alpha-L-Rha glycosidic bond in the rhamnogalacturonan I backbone with initial inversion of anomeric configuration releasing oligosaccharides with beta-D-GalA at the reducing end.. Functionally, pectinolytic enzymes consist of four classes of enzymes: pectine lyase, polygalacturonase, pectin methylesterase and rhamnogalacturonase. Hydrolyzes alpha-D-galacturonopyranosyl-(1,2)-alpha-L-rhamnopyranosyl linkages in the backbone of the hairy regions of pectins. This Aspergillus fumigatus (strain ATCC MYA-4609 / CBS 101355 / FGSC A1100 / Af293) (Neosartorya fumigata) protein is Probable rhamnogalacturonase B (rhgB).